We begin with the raw amino-acid sequence, 138 residues long: Large ribosomal subunit protein uL16 (138 aa).

Residues 1 to 19 are compositionally biased toward basic residues; sequence MLIPKRVKYRRQHRPHRSG. Residues 1–24 are disordered; sequence MLIPKRVKYRRQHRPHRSGVSKGG.

It belongs to the universal ribosomal protein uL16 family. In terms of assembly, part of the 50S ribosomal subunit.

In terms of biological role, binds 23S rRNA and is also seen to make contacts with the A and possibly P site tRNAs. This chain is Large ribosomal subunit protein uL16, found in Corynebacterium jeikeium (strain K411).